Here is a 185-residue protein sequence, read N- to C-terminus: MDIDPYKEFGATVELLSFLPSDFFPSVRDLXDTASALYREALESPEHCSPHHTALRQAILCWGKLMTLATWVGNNLEDPASRDLVVNYVNTNMGLKIRQLLWFHISCLTFGRETVLEYLVSFGVWIRTPPAYRPPNAPILSTLPETTVVRRRDRGRSPRRRTPSPRRRRSQSPRRRRSQSRESQC.

The tract at residues 136–185 is disordered; the sequence is NAPILSTLPETTVVRRRDRGRSPRRRTPSPRRRRSQSPRRRRSQSRESQC. The span at 149-178 shows a compositional bias: basic residues; it reads VRRRDRGRSPRRRTPSPRRRRSQSPRRRRS. A phosphoserine; by host mark is found at S157, S164, and S172. A 1; half-length repeat occupies 157-163; it reads SPRRRTP. Residues 157 to 179 are 3 X 8 AA repeats of S-P-R-R-R-[PR]-S-Q; the sequence is SPRRRTPSPRRRRSQSPRRRRSQ. Residues 160–177 carry the Bipartite nuclear localization signal motif; the sequence is RRTPSPRRRRSQSPRRRR. Tandem repeats lie at residues 164–171 and 172–179. The segment at 179 to 185 is RNA binding; it reads QSRESQC.

This sequence belongs to the orthohepadnavirus core antigen family. Homodimerizes, then multimerizes. Interacts with cytosol exposed regions of viral L glycoprotein present in the reticulum-to-Golgi compartment. Interacts with human FLNB. Phosphorylated form interacts with host importin alpha; this interaction depends on the exposure of the NLS, which itself depends upon genome maturation and/or phosphorylation of the capsid protein. Interacts with host NUP153. Post-translationally, phosphorylated by host SRPK1, SRPK2, and maybe protein kinase C or GAPDH. Phosphorylation is critical for pregenomic RNA packaging. Protein kinase C phosphorylation is stimulated by HBx protein and may play a role in transport of the viral genome to the nucleus at the late step during the viral replication cycle.

The protein localises to the virion. The protein resides in the host cytoplasm. Self assembles to form an icosahedral capsid. Most capsids appear to be large particles with an icosahedral symmetry of T=4 and consist of 240 copies of capsid protein, though a fraction forms smaller T=3 particles consisting of 180 capsid proteins. Entering capsids are transported along microtubules to the nucleus. Phosphorylation of the capsid is thought to induce exposure of nuclear localization signal in the C-terminal portion of the capsid protein that allows binding to the nuclear pore complex via the importin (karyopherin-) alpha and beta. Capsids are imported in intact form through the nuclear pore into the nuclear basket, where it probably binds NUP153. Only capsids that contain the mature viral genome can release the viral DNA and capsid protein into the nucleoplasm. Immature capsids get stuck in the basket. Capsids encapsulate the pre-genomic RNA and the P protein. Pre-genomic RNA is reverse-transcribed into DNA while the capsid is still in the cytoplasm. The capsid can then either be directed to the nucleus, providing more genomes for transcription, or bud through the endoplasmic reticulum to provide new virions. This chain is Capsid protein, found in Hepatitis B virus genotype A1 subtype adw (isolate Philippines/pFDW294/1988) (HBV-A).